A 459-amino-acid polypeptide reads, in one-letter code: Argininosuccinate lyase (459 aa).

The segment at aspartate 440–proline 459 is disordered.

The protein belongs to the lyase 1 family. Argininosuccinate lyase subfamily.

Its subcellular location is the cytoplasm. It carries out the reaction 2-(N(omega)-L-arginino)succinate = fumarate + L-arginine. The protein operates within amino-acid biosynthesis; L-arginine biosynthesis; L-arginine from L-ornithine and carbamoyl phosphate: step 3/3. The polypeptide is Argininosuccinate lyase (Pyrococcus furiosus (strain ATCC 43587 / DSM 3638 / JCM 8422 / Vc1)).